We begin with the raw amino-acid sequence, 384 residues long: Dual specificity protein phosphatase 5 (384 aa).

The 123-residue stretch at Ala19–Val141 folds into the Rhodanese domain. Positions Arg53–Arg74 match the Nuclear localization signal motif. The region spanning Gly178–Pro319 is the Tyrosine-protein phosphatase domain. Residue Cys263 is the Phosphocysteine intermediate of the active site.

It belongs to the protein-tyrosine phosphatase family. Non-receptor class dual specificity subfamily.

Its subcellular location is the nucleus. The catalysed reaction is O-phospho-L-tyrosyl-[protein] + H2O = L-tyrosyl-[protein] + phosphate. It catalyses the reaction O-phospho-L-seryl-[protein] + H2O = L-seryl-[protein] + phosphate. It carries out the reaction O-phospho-L-threonyl-[protein] + H2O = L-threonyl-[protein] + phosphate. Its function is as follows. Dual specificity protein phosphatase; active with phosphotyrosine, phosphoserine and phosphothreonine residues. The highest relative activity is toward ERK1. This is Dual specificity protein phosphatase 5 (DUSP5) from Homo sapiens (Human).